The primary structure comprises 230 residues: PKHD-type hydroxylase Xfasm12_1709 (230 aa).

In terms of domain architecture, Fe2OG dioxygenase spans 78–182 (RTLPPRFNRY…RIASFFWVQS (105 aa)). The Fe cation site is built by His96, Asp98, and His163. Arg173 is a 2-oxoglutarate binding site.

Requires Fe(2+) as cofactor. The cofactor is L-ascorbate.

The sequence is that of PKHD-type hydroxylase Xfasm12_1709 from Xylella fastidiosa (strain M12).